The primary structure comprises 263 residues: NH(3)-dependent NAD(+) synthetase (263 aa).

Position 29-36 (Gly29–Ser36) interacts with ATP. Asp35 serves as a coordination point for Mg(2+). Arg114 serves as a coordination point for deamido-NAD(+). Thr134 is a binding site for ATP. Glu139 provides a ligand contact to Mg(2+). Deamido-NAD(+) contacts are provided by Lys147 and Asp154. Residues Lys163 and Ser185 each contribute to the ATP site. His244 to Lys245 contributes to the deamido-NAD(+) binding site.

The protein belongs to the NAD synthetase family. In terms of assembly, homodimer.

The catalysed reaction is deamido-NAD(+) + NH4(+) + ATP = AMP + diphosphate + NAD(+) + H(+). It participates in cofactor biosynthesis; NAD(+) biosynthesis; NAD(+) from deamido-NAD(+) (ammonia route): step 1/1. In terms of biological role, catalyzes the ATP-dependent amidation of deamido-NAD to form NAD. Uses ammonia as a nitrogen source. The protein is NH(3)-dependent NAD(+) synthetase of Methanococcoides burtonii (strain DSM 6242 / NBRC 107633 / OCM 468 / ACE-M).